Consider the following 37-residue polypeptide: Large ribosomal subunit protein bL36 (37 aa).

It belongs to the bacterial ribosomal protein bL36 family.

The protein is Large ribosomal subunit protein bL36 of Acidothermus cellulolyticus (strain ATCC 43068 / DSM 8971 / 11B).